We begin with the raw amino-acid sequence, 540 residues long: MAAKQITFNADARMALKRGVDKLADAVKVTLGPKGRNVIIEKKFGAPTVTKDGVTVAKEIELEDKLENVGAQMVKEVASKTSDVAGDGTTTATVLAQAILTAGLKSVTAGANPMDLKRGIDKAVEVVVAELRKMSQEVQDKNRIAQVATISANGDKAIGQLIADAFEKVGKDGVITVEEAKGTETTLEVVEGMQFDRGYLSPYFVTNPDTMEAVLEDAYILIHDKKISAMKDLLPILEKVVQTGRPLLIIAEDVEGEALATLVVNKLRGVLKVAAVKAPGFGDRRKAMLEDIAILTGGTVISEEKGYRLENATLDYLGQAERIIVDKDNTTIVGGKGDPAQIKARANQIRQQIEETTSDYDREKLQERLAKLAGGVAVLKIGAATEPEMKEKKARVEDALHATRAAVEEGIVPGGGVAYIRAIAALDKVEVENEDQKIGVQIVQRALEEPLRQIAANAGWEGSIVVQRVKEGQGDFGFNAQTEEFGNLLEQGVIDPTKVARTALENAASVAGLLLTTEAVVAEKPEKEKAAAPSPGDMDF.

ATP contacts are provided by residues 30–33, K51, 87–91, G415, and D495; these read TLGP and DGTTT.

It belongs to the chaperonin (HSP60) family. In terms of assembly, forms a cylinder of 14 subunits composed of two heptameric rings stacked back-to-back. Interacts with the co-chaperonin GroES.

It localises to the cytoplasm. The enzyme catalyses ATP + H2O + a folded polypeptide = ADP + phosphate + an unfolded polypeptide.. Functionally, together with its co-chaperonin GroES, plays an essential role in assisting protein folding. The GroEL-GroES system forms a nano-cage that allows encapsulation of the non-native substrate proteins and provides a physical environment optimized to promote and accelerate protein folding. The protein is Chaperonin GroEL of Rhodothermus marinus (Rhodothermus obamensis).